A 216-amino-acid chain; its full sequence is Octanoyltransferase (216 aa).

Positions 33–216 constitute a BPL/LPL catalytic domain; the sequence is AQTADELWIV…AEKLTRHLSG (184 aa). Substrate contacts are provided by residues 72–79, 148–150, and 162–164; these read RGGEVTYH, ALG, and GVS. The Acyl-thioester intermediate role is filled by Cys180.

Belongs to the LipB family.

The protein localises to the cytoplasm. The catalysed reaction is octanoyl-[ACP] + L-lysyl-[protein] = N(6)-octanoyl-L-lysyl-[protein] + holo-[ACP] + H(+). Its pathway is protein modification; protein lipoylation via endogenous pathway; protein N(6)-(lipoyl)lysine from octanoyl-[acyl-carrier-protein]: step 1/2. Its function is as follows. Catalyzes the transfer of endogenously produced octanoic acid from octanoyl-acyl-carrier-protein onto the lipoyl domains of lipoate-dependent enzymes. Lipoyl-ACP can also act as a substrate although octanoyl-ACP is likely to be the physiological substrate. This chain is Octanoyltransferase, found in Herminiimonas arsenicoxydans.